The following is a 253-amino-acid chain: Imidazole glycerol phosphate synthase subunit HisF (253 aa).

Active-site residues include aspartate 11 and aspartate 130.

The protein belongs to the HisA/HisF family. Heterodimer of HisH and HisF.

It localises to the cytoplasm. It catalyses the reaction 5-[(5-phospho-1-deoxy-D-ribulos-1-ylimino)methylamino]-1-(5-phospho-beta-D-ribosyl)imidazole-4-carboxamide + L-glutamine = D-erythro-1-(imidazol-4-yl)glycerol 3-phosphate + 5-amino-1-(5-phospho-beta-D-ribosyl)imidazole-4-carboxamide + L-glutamate + H(+). It functions in the pathway amino-acid biosynthesis; L-histidine biosynthesis; L-histidine from 5-phospho-alpha-D-ribose 1-diphosphate: step 5/9. In terms of biological role, IGPS catalyzes the conversion of PRFAR and glutamine to IGP, AICAR and glutamate. The HisF subunit catalyzes the cyclization activity that produces IGP and AICAR from PRFAR using the ammonia provided by the HisH subunit. The polypeptide is Imidazole glycerol phosphate synthase subunit HisF (Methylibium petroleiphilum (strain ATCC BAA-1232 / LMG 22953 / PM1)).